The sequence spans 658 residues: Putative endo-beta-N-acetylglucosaminidase (658 aa).

Residues 1–23 (MKKVRFIFLALLFFLASPEGAMA) form the signal peptide. Cell wall-binding repeat units follow at residues 42-63 (ANEWVFDTHYQSWFYIKADANY), 65-84 (ENEWLKQGDDYFYLKSGGYM), 86-105 (KSEWVEDKGAFYYLDQDGKM), 124-145 (IEDWVYDSQYDAWFYIKADGQH), 147-166 (EKEWLQIKGKDYYFKSGGYL), 185-206 (QQGWLFDKQYQSWFYIKENGNY), 208-227 (DKEWIFENGHYYYLKSGGYM), 229-248 (ANEWIWDKESWFYLKFDGKM), 250-271 (EKEWVYDSHSQAWYYFKSGGYM), 273-292 (ANEWIWDKESWFYLKSDGKI), 294-315 (EKEWVYDSHSQAWYYFKSGGYM), 317-336 (ANEWIWDKESWFYLKSDGKI), and 338-359 (EKEWVYDSHSQAWYYFKSGGYM).

It belongs to the glycosyl hydrolase 73 family.

The protein resides in the secreted. It carries out the reaction an N(4)-(oligosaccharide-(1-&gt;3)-[oligosaccharide-(1-&gt;6)]-beta-D-Man-(1-&gt;4)-beta-D-GlcNAc-(1-&gt;4)-alpha-D-GlcNAc)-L-asparaginyl-[protein] + H2O = an oligosaccharide-(1-&gt;3)-[oligosaccharide-(1-&gt;6)]-beta-D-Man-(1-&gt;4)-D-GlcNAc + N(4)-(N-acetyl-beta-D-glucosaminyl)-L-asparaginyl-[protein]. In terms of biological role, plays an important role in cell wall degradation and cell separation. In Streptococcus pneumoniae serotype 4 (strain ATCC BAA-334 / TIGR4), this protein is Putative endo-beta-N-acetylglucosaminidase (lytB).